A 179-amino-acid polypeptide reads, in one-letter code: MSSRVLTPDVVGIDALVHDHQTVLAKAEGGVVAVFANNAPAFYAVTPARLAELLALEEKLARPGSDVALDDQLYQEPQAAPVAVPMGKFAMYPDWQPDADFIRLAALWGVALREPVTTEELASFIAYWQAEGKVFHHVQWQQKLARSLQIGRASNGGLPKRDVNTVSEPDSQIPPGFRG.

Positions 156-179 (GGLPKRDVNTVSEPDSQIPPGFRG) are disordered.

Belongs to the DnaT family. Homooligomerizes. Interacts with PriB. Component of the replication restart primosome. Primosome assembly occurs via a 'hand-off' mechanism. PriA binds to replication forks, subsequently PriB then DnaT bind; DnaT then displaces ssDNA to generate the helicase loading substrate.

In terms of biological role, involved in the restart of stalled replication forks, which reloads the replicative helicase on sites other than the origin of replication. Can function in multiple replication restart pathways. Displaces ssDNA from a PriB-ssDNA complex. Probably forms a spiral filament on ssDNA. The protein is Replication restart protein DnaT of Shigella boydii serotype 18 (strain CDC 3083-94 / BS512).